The following is a 338-amino-acid chain: Large ribosomal subunit protein uL10 (338 aa).

Residues 309 to 327 (KAEVEEAKEEEKEEKKEEA) are compositionally biased toward basic and acidic residues. The segment at 309 to 338 (KAEVEEAKEEEKEEKKEEAAPAAAGLGLLF) is disordered.

It belongs to the universal ribosomal protein uL10 family. Part of the 50S ribosomal subunit. Forms part of the ribosomal stalk which helps the ribosome interact with GTP-bound translation factors. Forms a heptameric L10(L12)2(L12)2(L12)2 complex, where L10 forms an elongated spine to which the L12 dimers bind in a sequential fashion.

Its function is as follows. Forms part of the ribosomal stalk, playing a central role in the interaction of the ribosome with GTP-bound translation factors. In Methanothermococcus thermolithotrophicus (Methanococcus thermolithotrophicus), this protein is Large ribosomal subunit protein uL10.